The chain runs to 207 residues: 2,3-bisphosphoglycerate-dependent phosphoglycerate mutase (207 aa).

Residues 10–17 (RHGQSEWN), 23–24 (TG), Arg-62, 89–92 (ERDY), Lys-100, 116–117 (RR), and 160–161 (GN) contribute to the substrate site. His-11 (tele-phosphohistidine intermediate) is an active-site residue. Glu-89 functions as the Proton donor/acceptor in the catalytic mechanism.

This sequence belongs to the phosphoglycerate mutase family. BPG-dependent PGAM subfamily. As to quaternary structure, homodimer.

It catalyses the reaction (2R)-2-phosphoglycerate = (2R)-3-phosphoglycerate. It functions in the pathway carbohydrate degradation; glycolysis; pyruvate from D-glyceraldehyde 3-phosphate: step 3/5. Its function is as follows. Catalyzes the interconversion of 2-phosphoglycerate and 3-phosphoglycerate. The sequence is that of 2,3-bisphosphoglycerate-dependent phosphoglycerate mutase from Xanthobacter autotrophicus (strain ATCC BAA-1158 / Py2).